A 712-amino-acid polypeptide reads, in one-letter code: Eukaryotic translation initiation factor 3 subunit B (712 aa).

At Met1 the chain carries N-acetylmethionine. Residues 56–143 (NIIVVDHLPV…HIFAVNMFDD (88 aa)) enclose the RRM domain.

It belongs to the eIF-3 subunit B family. In terms of assembly, component of the eukaryotic translation initiation factor 3 (eIF-3) complex, which is composed of at least 13 different subunits. Binds to the translation initiation factor TIF3H1.

It is found in the cytoplasm. Functionally, RNA-binding component of the eukaryotic translation initiation factor 3 (eIF-3) complex, which is involved in protein synthesis of a specialized repertoire of mRNAs and, together with other initiation factors, stimulates binding of mRNA and methionyl-tRNAi to the 40S ribosome. The eIF-3 complex specifically targets and initiates translation of a subset of mRNAs involved in cell proliferation. The chain is Eukaryotic translation initiation factor 3 subunit B (TIF3B1) from Arabidopsis thaliana (Mouse-ear cress).